The chain runs to 506 residues: Cytochrome P450 4B1 (506 aa).

Glu310 is a binding site for heme. Ser431 carries the phosphoserine modification. Cys448 serves as a coordination point for heme.

This sequence belongs to the cytochrome P450 family. It depends on heme as a cofactor.

Its subcellular location is the endoplasmic reticulum membrane. It localises to the microsome membrane. It carries out the reaction an organic molecule + reduced [NADPH--hemoprotein reductase] + O2 = an alcohol + oxidized [NADPH--hemoprotein reductase] + H2O + H(+). Its function is as follows. Cytochromes P450 are a group of heme-thiolate monooxygenases. In liver microsomes, this enzyme is involved in an NADPH-dependent electron transport pathway. It oxidizes a variety of structurally unrelated compounds, including steroids, fatty acids, and xenobiotics. The sequence is that of Cytochrome P450 4B1 (CYP4B1) from Oryctolagus cuniculus (Rabbit).